Reading from the N-terminus, the 276-residue chain is Formamidopyrimidine-DNA glycosylase (276 aa).

Proline 2 acts as the Schiff-base intermediate with DNA in catalysis. Catalysis depends on glutamate 3, which acts as the Proton donor. Lysine 58 (proton donor; for beta-elimination activity) is an active-site residue. DNA contacts are provided by histidine 92, arginine 111, and arginine 153. The segment at 238 to 272 adopts an FPG-type zinc-finger fold; that stretch reads TVYGRERQNCLNCSSTIIKTKHSGRSTFYCRTCQY. The active-site Proton donor; for delta-elimination activity is the arginine 262.

Belongs to the FPG family. In terms of assembly, monomer. Zn(2+) is required as a cofactor.

The enzyme catalyses Hydrolysis of DNA containing ring-opened 7-methylguanine residues, releasing 2,6-diamino-4-hydroxy-5-(N-methyl)formamidopyrimidine.. The catalysed reaction is 2'-deoxyribonucleotide-(2'-deoxyribose 5'-phosphate)-2'-deoxyribonucleotide-DNA = a 3'-end 2'-deoxyribonucleotide-(2,3-dehydro-2,3-deoxyribose 5'-phosphate)-DNA + a 5'-end 5'-phospho-2'-deoxyribonucleoside-DNA + H(+). Functionally, involved in base excision repair of DNA damaged by oxidation or by mutagenic agents. Acts as a DNA glycosylase that recognizes and removes damaged bases. Has a preference for oxidized purines, such as 7,8-dihydro-8-oxoguanine (8-oxoG). Has AP (apurinic/apyrimidinic) lyase activity and introduces nicks in the DNA strand. Cleaves the DNA backbone by beta-delta elimination to generate a single-strand break at the site of the removed base with both 3'- and 5'-phosphates. The sequence is that of Formamidopyrimidine-DNA glycosylase from Rickettsia felis (strain ATCC VR-1525 / URRWXCal2) (Rickettsia azadi).